We begin with the raw amino-acid sequence, 205 residues long: Guanylate kinase (205 aa).

The region spanning 5 to 183 is the Guanylate kinase-like domain; the sequence is GTLYTVSAPS…ALTEFRSIVV (179 aa). 12 to 19 lines the ATP pocket; that stretch reads APSGAGKT.

The protein belongs to the guanylate kinase family.

The protein resides in the cytoplasm. It carries out the reaction GMP + ATP = GDP + ADP. Essential for recycling GMP and indirectly, cGMP. The sequence is that of Guanylate kinase from Saccharophagus degradans (strain 2-40 / ATCC 43961 / DSM 17024).